Reading from the N-terminus, the 423-residue chain is Ankyrin repeat and SAM domain-containing protein 4B (423 aa).

The interval 1–251 is mediates localization to microvilli; the sequence is MSTRYHQAAS…PKDFKEKLHF (251 aa). ANK repeat units lie at residues 31-60, 64-93, and 97-126; these read DGMT…DPDK, WGNT…NIFA, and DLKS…VQNT. The stretch at 130-169 forms a coiled coil; it reads KRVTRLKEQALKNARKQMKECERLQERHQNKMARTYSKED. Disordered regions lie at residues 158-181, 207-227, and 303-335; these read QNKM…STLS, KSKK…SGQR, and QRQG…AGDL. Residues 171–181 are compositionally biased toward low complexity; sequence GTISSSHSTLS. The segment covering 207–224 has biased composition (basic and acidic residues); the sequence is KSKKNKDTTEQLEKDGRS. The interval 253-352 is mediates interaction with MYO7B; it reads VEEDDDVQHE…EWEEDAVDAT (100 aa). Residues 301 to 335 adopt a coiled-coil conformation; it reads LFQRQGAAGTVEEEEEEEEEEEEEKREANGTAGDL. Residues 311-324 are compositionally biased toward acidic residues; that stretch reads VEEEEEEEEEEEEE. The SAM domain occupies 357 to 409; the sequence is FLQSQHLEEFLPIFMREQIDLEALLLCSDEDLQNIHMQLGPRKKVLSAIDKRK. The PDZ-binding; mediates interaction with USH1C motif lies at 421 to 423; sequence TSL.

As to quaternary structure, part of the IMAC/intermicrovillar adhesion complex/intermicrovillar tip-link complex composed of ANKS4B, MYO7B, USH1C, CDHR2 and CDHR5. Interacts with USH1C; the interaction is direct and is required for ANKS4B localization to the tip of microvilli. Interacts with MYO7B; the interaction is direct. May interact with HSPA5. In terms of tissue distribution, cochlea, kidney, lung, liver, pancreas, salivary gland and small intestine (at protein level). Expressed in kidney, small intestine, pancreas, liver and colon. Not detected in heart, spleen and brain.

It localises to the cell projection. It is found in the microvillus. In terms of biological role, as part of the intermicrovillar adhesion complex/IMAC plays a role in epithelial brush border differentiation, controlling microvilli organization and length. Plays a role in assembly of the complex. May play a role in cellular response to endoplasmic reticulum stress. This Mus musculus (Mouse) protein is Ankyrin repeat and SAM domain-containing protein 4B.